A 98-amino-acid chain; its full sequence is Endoribonuclease antitoxin GhoS (98 aa).

In terms of assembly, monomer. Unlike other TA antitoxins, this protein is stable.

Its function is as follows. Antitoxin component of a type V toxin-antitoxin (TA) system. Neutralizes the toxic effects of toxin GhoT by digesting ghoT transcripts in a sequence-specific manner. In concert with GhoT is involved in reducing cell growth during antibacterial stress. The chain is Endoribonuclease antitoxin GhoS from Escherichia coli O157:H7.